A 419-amino-acid polypeptide reads, in one-letter code: UDP-N-acetylglucosamine 1-carboxyvinyltransferase (419 aa).

22-23 (KN) contributes to the phosphoenolpyruvate binding site. Position 92 (Arg92) interacts with UDP-N-acetyl-alpha-D-glucosamine. Cys116 serves as the catalytic Proton donor. Cys116 carries the 2-(S-cysteinyl)pyruvic acid O-phosphothioketal modification. UDP-N-acetyl-alpha-D-glucosamine-binding positions include 121-125 (RPVDQ), Asp306, and Ile328.

Belongs to the EPSP synthase family. MurA subfamily.

The protein localises to the cytoplasm. It carries out the reaction phosphoenolpyruvate + UDP-N-acetyl-alpha-D-glucosamine = UDP-N-acetyl-3-O-(1-carboxyvinyl)-alpha-D-glucosamine + phosphate. The protein operates within cell wall biogenesis; peptidoglycan biosynthesis. Cell wall formation. Adds enolpyruvyl to UDP-N-acetylglucosamine. Target for the antibiotic phosphomycin. The protein is UDP-N-acetylglucosamine 1-carboxyvinyltransferase of Acinetobacter guillouiae (Acinetobacter genomosp. 11).